The following is a 631-amino-acid chain: Chaperone protein DnaK (631 aa).

A Phosphothreonine; by autocatalysis modification is found at Thr-198. The tract at residues 602–631 (EAAGGAQQAGKDDVVDAEFTEVDDDKKKSA) is disordered.

This sequence belongs to the heat shock protein 70 family.

In terms of biological role, acts as a chaperone. This Rhodopseudomonas palustris (strain ATCC BAA-98 / CGA009) protein is Chaperone protein DnaK.